Reading from the N-terminus, the 187-residue chain is UPF0301 protein Spro_4027 (187 aa).

Belongs to the UPF0301 (AlgH) family.

The protein is UPF0301 protein Spro_4027 of Serratia proteamaculans (strain 568).